A 157-amino-acid polypeptide reads, in one-letter code: Transcription inhibitor protein Gfh1 (157 aa).

Residues 1–74 (MAREVKLTKA…LEDVLSRAVI (74 aa)) are a coiled coil.

This sequence belongs to the GreA/GreB family. As to quaternary structure, interacts with RNAP.

Functionally, inhibits all catalytic activities of RNA polymerase (RNAP) by partially occluding its substrate-binding site and preventing NTP binding. This chain is Transcription inhibitor protein Gfh1 (gfh1), found in Thermus aquaticus.